Reading from the N-terminus, the 310-residue chain is Transcription initiation factor IIB (310 aa).

The TFIIB-type zinc finger occupies 9–41 (DKQTVCPECGSTELIGDYERAEVVCAHCGLVID). Residues Cys-14, Cys-17, Cys-33, and Cys-36 each contribute to the Zn(2+) site. 2 consecutive repeat copies span residues 127-210 (SELD…TREL) and 221-302 (DYVP…ELTE).

It belongs to the TFIIB family.

Its function is as follows. Stabilizes TBP binding to an archaeal box-A promoter. Also responsible for recruiting RNA polymerase II to the pre-initiation complex (DNA-TBP-TFIIB). In Methanobrevibacter smithii (strain ATCC 35061 / DSM 861 / OCM 144 / PS), this protein is Transcription initiation factor IIB.